The primary structure comprises 475 residues: tRNA-2-methylthio-N(6)-dimethylallyladenosine synthase (475 aa).

Residues 1-10 are compositionally biased toward basic and acidic residues; that stretch reads MQETTVKRDG. The interval 1–22 is disordered; it reads MQETTVKRDGASPSDAGTPATT. The MTTase N-terminal domain maps to 27 to 144; that stretch reads GKLYIRTFGC…LPDLIKRRRA (118 aa). Positions 36, 73, 107, 181, 185, and 188 each coordinate [4Fe-4S] cluster. The 234-residue stretch at 167-400 folds into the Radical SAM core domain; it reads RVDGATAFVS…QALINQQAAA (234 aa). The region spanning 403–466 is the TRAM domain; the sequence is QGMIGTRQRV…TNSLRGRVAG (64 aa).

This sequence belongs to the methylthiotransferase family. MiaB subfamily. In terms of assembly, monomer. Requires [4Fe-4S] cluster as cofactor.

It localises to the cytoplasm. It carries out the reaction N(6)-dimethylallyladenosine(37) in tRNA + (sulfur carrier)-SH + AH2 + 2 S-adenosyl-L-methionine = 2-methylsulfanyl-N(6)-dimethylallyladenosine(37) in tRNA + (sulfur carrier)-H + 5'-deoxyadenosine + L-methionine + A + S-adenosyl-L-homocysteine + 2 H(+). Its function is as follows. Catalyzes the methylthiolation of N6-(dimethylallyl)adenosine (i(6)A), leading to the formation of 2-methylthio-N6-(dimethylallyl)adenosine (ms(2)i(6)A) at position 37 in tRNAs that read codons beginning with uridine. In Bordetella bronchiseptica (strain ATCC BAA-588 / NCTC 13252 / RB50) (Alcaligenes bronchisepticus), this protein is tRNA-2-methylthio-N(6)-dimethylallyladenosine synthase.